We begin with the raw amino-acid sequence, 282 residues long: Acetylglutamate kinase (282 aa).

Residues 62–63, R84, and N178 contribute to the substrate site; that span reads GG.

This sequence belongs to the acetylglutamate kinase family. ArgB subfamily.

It localises to the cytoplasm. The enzyme catalyses N-acetyl-L-glutamate + ATP = N-acetyl-L-glutamyl 5-phosphate + ADP. The protein operates within amino-acid biosynthesis; L-arginine biosynthesis; N(2)-acetyl-L-ornithine from L-glutamate: step 2/4. Catalyzes the ATP-dependent phosphorylation of N-acetyl-L-glutamate. In Thermotoga petrophila (strain ATCC BAA-488 / DSM 13995 / JCM 10881 / RKU-1), this protein is Acetylglutamate kinase.